Here is a 165-residue protein sequence, read N- to C-terminus: Basic leucine zipper 43 (165 aa).

The 64-residue stretch at 70–133 (NERKQKRKIS…EKVIEENVQL (64 aa)) folds into the bZIP domain. The basic motif stretch occupies residues 72–93 (RKQKRKISNRESARRSRMRKQR). The tract at residues 98–112 (LWSQVMWLRDENHQL) is leucine-zipper.

Forms heterodimers with BZIP34 and BZIP61.

Its subcellular location is the nucleus. In terms of biological role, probable transcription factor involved in somatic embryogenesis. Acts as a positive regulator of BHLH109. This chain is Basic leucine zipper 43, found in Arabidopsis thaliana (Mouse-ear cress).